Here is a 107-residue protein sequence, read N- to C-terminus: Integration host factor subunit beta (107 aa).

A disordered region spans residues 56–107; sequence RPARVGRNPKSGEKVQVPEKFVPHFKPGKELRERVDGRAGEPLKADDPDDER. The span at 82-101 shows a compositional bias: basic and acidic residues; that stretch reads PGKELRERVDGRAGEPLKAD.

Belongs to the bacterial histone-like protein family. In terms of assembly, heterodimer of an alpha and a beta chain.

This protein is one of the two subunits of integration host factor, a specific DNA-binding protein that functions in genetic recombination as well as in transcriptional and translational control. The polypeptide is Integration host factor subunit beta (Burkholderia vietnamiensis (strain G4 / LMG 22486) (Burkholderia cepacia (strain R1808))).